The sequence spans 855 residues: tRNA(Met) cytidine acetyltransferase TmcA (855 aa).

Residues glutamine 260, 286–295 (GRGKSALLGI), and arginine 438 contribute to the ATP site. The 184-residue stretch at 480–663 (PDLRYWFEDP…GEYSVAVIRP (184 aa)) folds into the N-acetyltransferase domain. Residues 590–592 (IAT), 597–603 (MRHGLGS), glutamate 630, and arginine 637 each bind acetyl-CoA.

It belongs to the RNA cytidine acetyltransferase family. TmcA subfamily.

Its subcellular location is the cytoplasm. It carries out the reaction cytidine(34) in elongator tRNA(Met) + acetyl-CoA + ATP + H2O = N(4)-acetylcytidine(34) in elongator tRNA(Met) + ADP + phosphate + CoA + H(+). In terms of biological role, catalyzes the formation of N(4)-acetylcytidine (ac(4)C) at the wobble position of tRNA(Met), by using acetyl-CoA as an acetyl donor and ATP (or GTP). In Methanopyrus kandleri (strain AV19 / DSM 6324 / JCM 9639 / NBRC 100938), this protein is tRNA(Met) cytidine acetyltransferase TmcA.